Reading from the N-terminus, the 758-residue chain is MRFAFFGIFWLQIFGSILFLLGFFPHKNDSTGKAMSNQFSPPAVIDQVVFVMVDALRADFVFSKSHNMPFTQSLLYNSTHGIGFSAFARSPTVTMPRLKALTTGTIPGFLDVLLNIAESDTGSSIEAQDSWVYQLNSFNKKIEFYGDDTWLKLFPSAFSKFEGTTSFFVSDYTEVDNNVTRNFDHALPSSLSHSWDALILHYLGVDHIGHLYGPSSPLLNIKLLEIDTIISRIYKYLQEYDEKTNTHSLIVLCGDHGMNEVGNHGGSSSGETTAALSLLFPSNELSHINKPILNMDDNPYSILERVEQVDVVPTICLLLGIPIPKGNMGKVLSPVTELWKDTKTAKMAALSNLFQLSLLKNPSLTTSELSTQFQDSDLNDIRLALENLQSQMVAQSSSYSLDRMLVAISILGACSILSLILFRNLYNYKELLAFAPFVVQNIIIVFSSSFIEEEHVIWYFAAVSLSLLQLLNPKTRLAGSLQLFCLSIIKRWNQTGQKYSDLRDIVDDFIAPSTFMKTILCVTSAFMPAIRSPSPINFLSSMFIAFYKLMPIISKHLNELPIIASFDYTFFVRIIWSLLLISFLSKPTFKQLRCQLSLFILLLTRLENMGLYLLYDIWQRTMPEEGTLASVMYYVAEQVAFFSLGNSNSLATVDLSQAYTGLDSYNIFAVGILLFTSVFAGALWWCLHQPKRMMDRSVKTFWIMSSISLTFLCISCFIMRHHLFVWSVFSPKLLYNASWASMYFLAKCLISTIMVRLR.

Residues Asn28, Asn77, and Asn178 are each glycosylated (N-linked (GlcNAc...) asparagine). Helical transmembrane passes span 405-425 (LVAI…FRNL), 431-451 (LLAF…SSFI), and 455-472 (HVIW…QLLN). Residue Asn493 is glycosylated (N-linked (GlcNAc...) asparagine). A run of 6 helical transmembrane segments spans residues 533–553 (PSPI…MPII), 561–581 (PIIA…LLLI), 598–618 (LFIL…YDIW), 667–687 (IFAV…WWCL), 698–718 (VKTF…SCFI), and 733–753 (LLYN…ISTI).

It belongs to the PIGG/PIGN/PIGO family. PIGG subfamily.

The protein resides in the endoplasmic reticulum membrane. The protein operates within glycolipid biosynthesis; glycosylphosphatidylinositol-anchor biosynthesis. Its function is as follows. Ethanolamine phosphate transferase involved in glycosylphosphatidylinositol-anchor biosynthesis. Transfers ethanolamine phosphate to the GPI second mannose. The polypeptide is GPI ethanolamine phosphate transferase 2 (las21) (Schizosaccharomyces pombe (strain 972 / ATCC 24843) (Fission yeast)).